Here is a 406-residue protein sequence, read N- to C-terminus: NAD(P)H-quinone oxidoreductase subunit H, organellar chromatophore (406 aa).

Belongs to the complex I 49 kDa subunit family. In terms of assembly, NDH is composed of at least 16 different subunits, 5 of which are encoded in the nucleus.

It localises to the plastid. Its subcellular location is the organellar chromatophore thylakoid membrane. It carries out the reaction a quinone + NADH + H(+) = a quinol + NAD(+). In terms of biological role, NDH shuttles electrons from NAD(P)H:plastoquinone, via FMN and iron-sulfur (Fe-S) centers, to quinones in the photosynthetic chain and possibly in a chloroplast respiratory chain. The immediate electron acceptor for the enzyme in this species is believed to be plastoquinone. Couples the redox reaction to proton translocation, and thus conserves the redox energy in a proton gradient. This chain is NAD(P)H-quinone oxidoreductase subunit H, organellar chromatophore, found in Paulinella chromatophora.